A 123-amino-acid chain; its full sequence is Protein Wnt-3a (123 aa).

The O-palmitoleoyl serine moiety is linked to residue Ser-1. The cysteines at positions 89 and 104 are disulfide-linked. N-linked (GlcNAc...) asparagine glycosylation is present at Asn-90.

This sequence belongs to the Wnt family. Post-translationally, disulfide bonds have critical and distinct roles in secretion and activity. Loss of each conserved cysteine results in high molecular weight oxidized Wnt oligomers, which are formed through inter-Wnt disulfide bonding. In terms of processing, palmitoleoylation is required for efficient binding to frizzled receptors. Depalmitoleoylation leads to Wnt signaling pathway inhibition.

It is found in the secreted. Its subcellular location is the extracellular space. It localises to the extracellular matrix. In terms of biological role, ligand for members of the frizzled family of seven transmembrane receptors. Functions in the canonical Wnt signaling pathway that results in activation of transcription factors of the TCF/LEF family. Required for normal embryonic mesoderm development and formation of caudal somites. Required for normal morphogenesis of the developing neural tube. This chain is Protein Wnt-3a (WNT-3A), found in Alopias vulpinus (Common thresher shark).